The chain runs to 208 residues: Large ribosomal subunit protein bL25 (208 aa).

Belongs to the bacterial ribosomal protein bL25 family. CTC subfamily. Part of the 50S ribosomal subunit; part of the 5S rRNA/L5/L18/L25 subcomplex. Contacts the 5S rRNA. Binds to the 5S rRNA independently of L5 and L18.

In terms of biological role, this is one of the proteins that binds to the 5S RNA in the ribosome where it forms part of the central protuberance. This Leptothrix cholodnii (strain ATCC 51168 / LMG 8142 / SP-6) (Leptothrix discophora (strain SP-6)) protein is Large ribosomal subunit protein bL25.